Reading from the N-terminus, the 508-residue chain is Proline--tRNA ligase 2 (508 aa).

This sequence belongs to the class-II aminoacyl-tRNA synthetase family. ProS type 3 subfamily. In terms of assembly, homodimer.

It is found in the cytoplasm. It carries out the reaction tRNA(Pro) + L-proline + ATP = L-prolyl-tRNA(Pro) + AMP + diphosphate. Catalyzes the attachment of proline to tRNA(Pro) in a two-step reaction: proline is first activated by ATP to form Pro-AMP and then transferred to the acceptor end of tRNA(Pro). This chain is Proline--tRNA ligase 2, found in Bacillus anthracis.